The sequence spans 604 residues: Prostaglandin G/H synthase 2 (604 aa).

Positions 1–17 are cleaved as a signal peptide; it reads MLARALLLCAVLALSHT. Residues 18–55 form the EGF-like domain; sequence ANPCCSHPCQNRGVCMSVGFDQYKCDCTRTGFYGENCS. 4 disulfides stabilise this stretch: Cys21/Cys32, Cys22/Cys145, Cys26/Cys42, and Cys44/Cys54. Asn53 is a glycosylation site (N-linked (GlcNAc...) asparagine). Arg106 lines the substrate pocket. A glycan (N-linked (GlcNAc...) asparagine) is linked at Asn130. The Proton acceptor role is filled by His193. Residue Tyr341 coordinates substrate. The active-site For cyclooxygenase activity is the Tyr371. Residue His374 participates in heme b binding. The N-linked (GlcNAc...) asparagine glycan is linked to Asn396. The residue at position 526 (Cys526) is an S-nitrosocysteine. An intrachain disulfide couples Cys555 to Cys561. Ser565 is modified (O-acetylserine). N-linked (GlcNAc...) asparagine glycosylation occurs at Asn580.

This sequence belongs to the prostaglandin G/H synthase family. In terms of assembly, homodimer. Heme b serves as cofactor. Post-translationally, S-nitrosylation by NOS2 (iNOS) activates enzyme activity. S-nitrosylation may take place on different Cys residues in addition to Cys-526. In terms of processing, acetylated at Ser-565 by SPHK1. During neuroinflammation, acetylation by SPHK1 promotes neuronal secretion of specialized preresolving mediators (SPMs), especially 15-R-lipoxin A4, which results in an increase of phagocytic microglia.

It is found in the microsome membrane. It localises to the endoplasmic reticulum membrane. The protein localises to the nucleus inner membrane. The protein resides in the nucleus outer membrane. It carries out the reaction (5Z,8Z,11Z,14Z)-eicosatetraenoate + AH2 + 2 O2 = prostaglandin H2 + A + H2O. It catalyses the reaction (5Z,8Z,11Z,14Z)-eicosatetraenoate + 2 O2 = prostaglandin G2. The catalysed reaction is prostaglandin G2 + AH2 = prostaglandin H2 + A + H2O. The enzyme catalyses (5Z,8Z,11Z,14Z,17Z)-eicosapentaenoate + 2 O2 = prostaglandin G3. It carries out the reaction prostaglandin G3 + AH2 = prostaglandin H3 + A + H2O. It catalyses the reaction (8Z,11Z,14Z)-eicosatrienoate + 2 O2 = prostaglandin G1. The catalysed reaction is prostaglandin G1 + AH2 = prostaglandin H1 + A + H2O. The enzyme catalyses 2-(5Z,8Z,11Z,14Z)-eicosatetraenoyl-sn-glycero-3-phosphoethanolamine + 2 O2 = 2-(prostaglandin G2)-sn-glycero-3-phosphoethanolamine. It carries out the reaction 2-(prostaglandin G2)-sn-glycero-3-phosphoethanolamine + AH2 = 2-(prostaglandin H2)-sn-glycero-3-phosphoethanolamine + A + H2O. It catalyses the reaction 2-(5Z,8Z,11Z,14Z)-eicosatetraenoyl-sn-glycero-3-phosphocholine + 2 O2 = 2-(prostaglandin G2)-sn-glycero-3-phosphocholine. The catalysed reaction is 2-(prostaglandin G2)-sn-glycero-3-phosphocholine + AH2 = 2-(prostaglandin H2)-sn-glycero-3-phosphocholine + A + H2O. The enzyme catalyses (15S)-hydroperoxy-(5Z,8Z,11Z,13E)-eicosatetraenoate + AH2 = (15S)-hydroxy-(5Z,8Z,11Z,13E)-eicosatetraenoate + A + H2O. It carries out the reaction 2-(5Z,8Z,11Z,14Z)-eicosatetraenoyl-sn-glycero-3-phosphocholine + AH2 + O2 = 2-[(15S)-hydroxy-(5Z,8Z,11Z,13E)-eicosatetraenoyl]-sn-glycero-3-phosphocholine + A + H2O. It catalyses the reaction 2-(5Z,8Z,11Z,14Z)-eicosatetraenoyl-sn-glycero-3-phosphocholine + AH2 + O2 = 2-[(15R)-hydroxy-(5Z,8Z,11Z,13E)-eicosatetraenoyl]-sn-glycero-3-phosphocholine + A + H2O. The catalysed reaction is 2-(5Z,8Z,11Z,14Z)-eicosatetraenoyl-sn-glycero-3-phosphocholine + AH2 + O2 = 2-[(11R)-hydroxy-(5Z,8Z,12E,14Z)-eicosatetraenoyl]-sn-glycero-3-phosphocholine + A + H2O. The enzyme catalyses (9Z,12Z)-octadecadienoate + AH2 + O2 = 9-hydroxy-(10E,12Z)-octadecadienoate + A + H2O. It carries out the reaction (9Z,12Z)-octadecadienoate + AH2 + O2 = 13-hydroxy-(9Z,11E)-octadecadienoate + A + H2O. It catalyses the reaction (5Z,8Z,11Z,14Z)-eicosatetraenoate + AH2 + O2 = (15R)-hydroxy-(5Z,8Z,11Z,13E)-eicosatetraenoate + A + H2O. The catalysed reaction is (5Z,8Z,11Z,14Z)-eicosatetraenoate + AH2 + O2 = (11R)-hydroxy-(5Z,8Z,12E,14Z)-eicosatetraenoate + A + H2O. The enzyme catalyses (5Z,8Z,11Z,14Z,17Z)-eicosapentaenoate + AH2 + O2 = (11R)-hydroxy-(5Z,8Z,12E,14Z,17Z)-eicosapentaenoate + A + H2O. It carries out the reaction (5Z,8Z,11Z,14Z,17Z)-eicosapentaenoate + AH2 + O2 = (18S)-hydroxy-(5Z,8Z,11Z,14Z,16E)-eicosapentaenoate + A + H2O. It catalyses the reaction (5Z,8Z,11Z,14Z,17Z)-eicosapentaenoate + AH2 + O2 = (18R)-hydroxy-(5Z,8Z,11Z,14Z,16E)-eicosapentaenoate + A + H2O. The catalysed reaction is (5Z,8Z,11Z,14Z,17Z)-eicosapentaenoate + AH2 + O2 = (15R)-hydroxy-(5Z,8Z,11Z,13E,17Z)-eicosapentaenoate + A + H2O. The enzyme catalyses (5Z,8Z,11Z,14Z,17Z)-eicosapentaenoate + AH2 + O2 = (15S)-hydroxy-(5Z,8Z,11Z,13E,17Z)-eicosapentaenoate + A + H2O. It carries out the reaction (7Z,10Z,13Z,16Z,19Z)-docosapentaenoate + AH2 + O2 = 13R-hydroxy-(7Z,10Z,14E,16Z,19Z)-docosapentaenoate + A + H2O. It catalyses the reaction (4Z,7Z,10Z,13Z,16Z,19Z)-docosahexaenoate + AH2 + O2 = 13-hydroxy-(4Z,7Z,10Z,14E,16Z,19Z)-docosahexaenoate + A + H2O. The catalysed reaction is (5S)-hydroxy-(6E,8Z,11Z,14Z)-eicosatetraenoate + AH2 + O2 = (5S,15R)-dihydroxy-(6E,8Z,11Z,13E)-eicosatetraenoate + A + H2O. The enzyme catalyses (4Z,7Z,10Z,13Z,16Z,19Z)-docosahexaenoate + AH2 + O2 = 17R-hydroxy-(4Z,7Z,10Z,13Z,15E,19Z)-docosahexaenoate + A + H2O. It carries out the reaction (5S)-hydroxy-(6E,8Z,11Z,14Z)-eicosatetraenoate + AH2 + O2 = (5S,15S)-dihydroxy-(6E,8Z,11Z,13E)-eicosatetraenoate + A + H2O. It catalyses the reaction (5S)-hydroxy-(6E,8Z,11Z,14Z)-eicosatetraenoate + AH2 + O2 = (5S,11R)-dihydroxy-(6E,8Z,12E,14Z)-eicosatetraenoate + A + H2O. The catalysed reaction is 2-(5Z,8Z,11Z,14Z-eicosatetraenoyl)-glycerol + 2 O2 = 2-glyceryl-prostaglandin G2. The enzyme catalyses 2-glyceryl-prostaglandin G2 + AH2 = 2-glyceryl-prostaglandin H2 + A + H2O. It carries out the reaction (5Z,8Z,11Z,14Z)-eicosatetraenoate + O2 = (15R)-hydroperoxy-(5Z,8Z,11Z,13E)-eicosatetraenoate. It catalyses the reaction (5Z,8Z,11Z,14Z)-eicosatetraenoate + O2 = 11R-hydroperoxy-(5Z,8Z,12E,14Z)-eicosatetraenoate. The catalysed reaction is (9Z,12Z)-octadecadienoate + AH2 + O2 = (9R)-hydroxy-(10E,12Z)-octadecadienoate + A + H2O. The enzyme catalyses (9Z,12Z)-octadecadienoate + AH2 + O2 = (9S)-hydroxy-(10E,12Z)-octadecadienoate + A + H2O. It carries out the reaction (9Z,12Z)-octadecadienoate + AH2 + O2 = (13S)-hydroxy-(9Z,11E)-octadecadienoate + A + H2O. It catalyses the reaction (9Z,12Z)-octadecadienoate + AH2 + O2 = (13R)-hydroxy-(9Z,11E)-octadecadienoate + A + H2O. The protein operates within lipid metabolism; prostaglandin biosynthesis. With respect to regulation, the cyclooxygenase activity is inhibited by nonsteroidal anti-inflammatory drugs (NSAIDs) including aspirin, ibuprofen, flurbiprofen, celecoxib, flufenamic, mefenamic and tolfenamic acids as well as by hydroperoxide scavenger erythrocyte glutathione peroxidase GPX1. Aspirin triggers enzyme acetylation turning off its ability to generate pro-inflammatory prostaglandins, but switches on its capacity to produce anti-inflammatory lipid mediators involved in inflammation resolution. Aspirin enhances lipoxygenase-type activity toward production of epimers with R stereochemistry such as 15R-HETE, 18R-HEPE, 15R-HEPE and 17R-HDHA. Atorvastatin, a cholesterol-lowering drug, triggers enzyme S-nitrosylation increasing production of 13-series resolvins (RvTs). Dual cyclooxygenase and peroxidase in the biosynthesis pathway of prostanoids, a class of C20 oxylipins mainly derived from arachidonate ((5Z,8Z,11Z,14Z)-eicosatetraenoate, AA, C20:4(n-6)), with a particular role in the inflammatory response. The cyclooxygenase activity oxygenates AA to the hydroperoxy endoperoxide prostaglandin G2 (PGG2), and the peroxidase activity reduces PGG2 to the hydroxy endoperoxide prostaglandin H2 (PGH2), the precursor of all 2-series prostaglandins and thromboxanes. This complex transformation is initiated by abstraction of hydrogen at carbon 13 (with S-stereochemistry), followed by insertion of molecular O2 to form the endoperoxide bridge between carbon 9 and 11 that defines prostaglandins. The insertion of a second molecule of O2 (bis-oxygenase activity) yields a hydroperoxy group in PGG2 that is then reduced to PGH2 by two electrons. Similarly catalyzes successive cyclooxygenation and peroxidation of dihomo-gamma-linoleate (DGLA, C20:3(n-6)) and eicosapentaenoate (EPA, C20:5(n-3)) to corresponding PGH1 and PGH3, the precursors of 1- and 3-series prostaglandins. In an alternative pathway of prostanoid biosynthesis, converts 2-arachidonoyl lysophopholipids to prostanoid lysophopholipids, which are then hydrolyzed by intracellular phospholipases to release free prostanoids. Metabolizes 2-arachidonoyl glycerol yielding the glyceryl ester of PGH2, a process that can contribute to pain response. Generates lipid mediators from n-3 and n-6 polyunsaturated fatty acids (PUFAs) via a lipoxygenase-type mechanism. Oxygenates PUFAs to hydroperoxy compounds and then reduces them to corresponding alcohols. Plays a role in the generation of resolution phase interaction products (resolvins) during both sterile and infectious inflammation. Metabolizes docosahexaenoate (DHA, C22:6(n-3)) to 17R-HDHA, a precursor of the D-series resolvins (RvDs). As a component of the biosynthetic pathway of E-series resolvins (RvEs), converts eicosapentaenoate (EPA, C20:5(n-3)) primarily to 18S-HEPE that is further metabolized by ALOX5 and LTA4H to generate 18S-RvE1 and 18S-RvE2. In vascular endothelial cells, converts docosapentaenoate (DPA, C22:5(n-3)) to 13R-HDPA, a precursor for 13-series resolvins (RvTs) shown to activate macrophage phagocytosis during bacterial infection. In activated leukocytes, contributes to oxygenation of hydroxyeicosatetraenoates (HETE) to diHETES (5,15-diHETE and 5,11-diHETE). Can also use linoleate (LA, (9Z,12Z)-octadecadienoate, C18:2(n-6)) as substrate and produce hydroxyoctadecadienoates (HODEs) in a regio- and stereospecific manner, being (9R)-HODE ((9R)-hydroxy-(10E,12Z)-octadecadienoate) and (13S)-HODE ((13S)-hydroxy-(9Z,11E)-octadecadienoate) its major products. During neuroinflammation, plays a role in neuronal secretion of specialized preresolving mediators (SPMs) 15R-lipoxin A4 that regulates phagocytic microglia. In Homo sapiens (Human), this protein is Prostaglandin G/H synthase 2.